Consider the following 210-residue polypeptide: MDKELLQSTVRKVLDEMRQRPIPLGVSNRHIHLSAQDYERLFPGHPISEKKALLQPGQYAAEQTVTLVGPKGQLKNVRLLGPLRSVSQVEISRTDARTLGIAAPLRMSGNLKGTPGIRLVSPFAELELPSGVIVAQRHIHMSPLDALILRVSHGDMVSVAIEGDDRGLIFNNVAIRVSPDMRLEMHIDTDEANAAGADNPHAFARLVGPR.

26–28 (VSN) is a binding site for CoA. Zn(2+) contacts are provided by His30 and His32. 2 residues coordinate CoA: Lys71 and Arg78. Arg84 contributes to the phosphate binding site. Positions 90, 138, 140, and 186 each coordinate Zn(2+). Asn193 lines the CoA pocket.

This sequence belongs to the PduL family. As to quaternary structure, monomer, when purified in the absence of the encapsulation peptide (EP, residues 1-27). The EP may influence oligomerization. Zn(2+) is required as a cofactor.

It is found in the bacterial microcompartment. The catalysed reaction is propanoyl-CoA + phosphate = propanoyl phosphate + CoA. It functions in the pathway polyol metabolism; 1,2-propanediol degradation. Involved in 1,2-propanediol (1,2-PD) utilization in the bacterial microcompartment (BMC) dedicated to 1,2-PD degradation by catalyzing the conversion of propanoyl-CoA to propanoyl-phosphate. Also able to catalyze the reverse reaction. Also has phosphate acetyltransferase activity to a lesser extent. Required for optimal growth on 1,2-PD when the BMC is intact. CoA is regenerated within the BMC (for use by PduP) via this enzyme, although there must also be cofactor transport across the BMC. Directly targeted to the BMC. Its function is as follows. The 1,2-PD-specific bacterial microcompartment (BMC) concentrates low levels of 1,2-PD catabolic enzymes, concentrates volatile reaction intermediates thus enhancing pathway flux and keeps the level of toxic, mutagenic propionaldehyde low. The sequence is that of Phosphate propanoyltransferase from Salmonella typhimurium (strain LT2 / SGSC1412 / ATCC 700720).